Reading from the N-terminus, the 169-residue chain is Protein-export protein SecB (169 aa).

It belongs to the SecB family. In terms of assembly, homotetramer, a dimer of dimers. One homotetramer interacts with 1 SecA dimer.

The protein resides in the cytoplasm. One of the proteins required for the normal export of preproteins out of the cell cytoplasm. It is a molecular chaperone that binds to a subset of precursor proteins, maintaining them in a translocation-competent state. It also specifically binds to its receptor SecA. This Pseudoalteromonas atlantica (strain T6c / ATCC BAA-1087) protein is Protein-export protein SecB.